The chain runs to 454 residues: Bifunctional protein GlmU (454 aa).

The interval Met-1–Arg-231 is pyrophosphorylase. UDP-N-acetyl-alpha-D-glucosamine contacts are provided by residues Leu-11 to Gly-14, Lys-25, Gln-78, Gly-83 to Thr-84, Tyr-106 to Asp-108, Gly-143, Glu-157, Asn-172, and Asn-229. Asp-108 lines the Mg(2+) pocket. Residue Asn-229 coordinates Mg(2+). The tract at residues Ala-232–Asp-252 is linker. An N-acetyltransferase region spans residues Gly-253–Pro-454. Arg-318 and Lys-336 together coordinate UDP-N-acetyl-alpha-D-glucosamine. His-348 acts as the Proton acceptor in catalysis. Residues Tyr-351 and Asn-362 each coordinate UDP-N-acetyl-alpha-D-glucosamine. Residues Ala-365, Asn-371–Tyr-372, Ser-390, Ser-408, and Arg-425 contribute to the acetyl-CoA site.

In the N-terminal section; belongs to the N-acetylglucosamine-1-phosphate uridyltransferase family. This sequence in the C-terminal section; belongs to the transferase hexapeptide repeat family. As to quaternary structure, homotrimer. It depends on Mg(2+) as a cofactor.

It is found in the cytoplasm. The catalysed reaction is alpha-D-glucosamine 1-phosphate + acetyl-CoA = N-acetyl-alpha-D-glucosamine 1-phosphate + CoA + H(+). It carries out the reaction N-acetyl-alpha-D-glucosamine 1-phosphate + UTP + H(+) = UDP-N-acetyl-alpha-D-glucosamine + diphosphate. Its pathway is nucleotide-sugar biosynthesis; UDP-N-acetyl-alpha-D-glucosamine biosynthesis; N-acetyl-alpha-D-glucosamine 1-phosphate from alpha-D-glucosamine 6-phosphate (route II): step 2/2. It participates in nucleotide-sugar biosynthesis; UDP-N-acetyl-alpha-D-glucosamine biosynthesis; UDP-N-acetyl-alpha-D-glucosamine from N-acetyl-alpha-D-glucosamine 1-phosphate: step 1/1. It functions in the pathway bacterial outer membrane biogenesis; LPS lipid A biosynthesis. Functionally, catalyzes the last two sequential reactions in the de novo biosynthetic pathway for UDP-N-acetylglucosamine (UDP-GlcNAc). The C-terminal domain catalyzes the transfer of acetyl group from acetyl coenzyme A to glucosamine-1-phosphate (GlcN-1-P) to produce N-acetylglucosamine-1-phosphate (GlcNAc-1-P), which is converted into UDP-GlcNAc by the transfer of uridine 5-monophosphate (from uridine 5-triphosphate), a reaction catalyzed by the N-terminal domain. The chain is Bifunctional protein GlmU from Cereibacter sphaeroides (strain ATCC 17023 / DSM 158 / JCM 6121 / CCUG 31486 / LMG 2827 / NBRC 12203 / NCIMB 8253 / ATH 2.4.1.) (Rhodobacter sphaeroides).